A 309-amino-acid chain; its full sequence is Ornithine carbamoyltransferase (309 aa).

Carbamoyl phosphate is bound by residues 51-54 (STRT), glutamine 78, arginine 102, and 129-132 (HPVQ). Residues asparagine 159, aspartate 223, and 227-228 (SM) each bind L-ornithine. Residues 263–264 (CL) and arginine 291 contribute to the carbamoyl phosphate site.

Belongs to the aspartate/ornithine carbamoyltransferase superfamily. OTCase family.

It localises to the cytoplasm. The enzyme catalyses carbamoyl phosphate + L-ornithine = L-citrulline + phosphate + H(+). It participates in amino-acid biosynthesis; L-arginine biosynthesis; L-arginine from L-ornithine and carbamoyl phosphate: step 1/3. Functionally, reversibly catalyzes the transfer of the carbamoyl group from carbamoyl phosphate (CP) to the N(epsilon) atom of ornithine (ORN) to produce L-citrulline. This Nitratiruptor sp. (strain SB155-2) protein is Ornithine carbamoyltransferase.